The chain runs to 117 residues: Crustacean hyperglycemic hormones 3 (117 aa).

Positions methionine 1–alanine 24 are cleaved as a signal peptide. 3 cysteine pairs are disulfide-bonded: cysteine 50/cysteine 86, cysteine 66/cysteine 82, and cysteine 69/cysteine 95. Valine 115 carries the post-translational modification Valine amide.

It belongs to the arthropod CHH/MIH/GIH/VIH hormone family. Produced by the medulla terminalis X-organ in the eyestalks and transported to the sinus gland where they are stored and released.

The protein localises to the secreted. Functionally, hormone found in the sinus gland of isopods and decapods which controls the blood sugar level. Has a secretagogue action over the amylase released from the midgut gland. May act as a stress hormone and may be involved in the control of molting and reproduction. The protein is Crustacean hyperglycemic hormones 3 of Penaeus japonicus (Kuruma prawn).